Here is a 110-residue protein sequence, read N- to C-terminus: Large ribosomal subunit protein uL24 (110 aa).

It belongs to the universal ribosomal protein uL24 family. In terms of assembly, part of the 50S ribosomal subunit.

One of two assembly initiator proteins, it binds directly to the 5'-end of the 23S rRNA, where it nucleates assembly of the 50S subunit. In terms of biological role, one of the proteins that surrounds the polypeptide exit tunnel on the outside of the subunit. The protein is Large ribosomal subunit protein uL24 of Frankia alni (strain DSM 45986 / CECT 9034 / ACN14a).